The following is a 185-amino-acid chain: Ribosome-recycling factor (185 aa).

The tract at residues 138 to 159 (KVKKLEKDKEISEDESKKAQEQ) is disordered.

The protein belongs to the RRF family.

It is found in the cytoplasm. Responsible for the release of ribosomes from messenger RNA at the termination of protein biosynthesis. May increase the efficiency of translation by recycling ribosomes from one round of translation to another. This chain is Ribosome-recycling factor, found in Helicobacter acinonychis (strain Sheeba).